A 1297-amino-acid polypeptide reads, in one-letter code: Phosphoribosylformylglycinamidine synthase (1297 aa).

Positions 303-329 (ISPFPGAATGSGGEIRDEGATGRGAKP) are disordered. Residue 308–319 (GAATGSGGEIRD) coordinates ATP. Positions 680, 719, 723, and 887 each coordinate Mg(2+). Ser889 contributes to the ATP binding site. The Glutamine amidotransferase type-1 domain maps to 1045–1297 (IAILREQGVN…RLFRNARMVF (253 aa)). The active-site Nucleophile is the Cys1138. Active-site residues include His1263 and Glu1265.

It in the N-terminal section; belongs to the FGAMS family. In terms of assembly, monomer.

It localises to the cytoplasm. The enzyme catalyses N(2)-formyl-N(1)-(5-phospho-beta-D-ribosyl)glycinamide + L-glutamine + ATP + H2O = 2-formamido-N(1)-(5-O-phospho-beta-D-ribosyl)acetamidine + L-glutamate + ADP + phosphate + H(+). Its pathway is purine metabolism; IMP biosynthesis via de novo pathway; 5-amino-1-(5-phospho-D-ribosyl)imidazole from N(2)-formyl-N(1)-(5-phospho-D-ribosyl)glycinamide: step 1/2. Phosphoribosylformylglycinamidine synthase involved in the purines biosynthetic pathway. Catalyzes the ATP-dependent conversion of formylglycinamide ribonucleotide (FGAR) and glutamine to yield formylglycinamidine ribonucleotide (FGAM) and glutamate. This Haemophilus influenzae (strain 86-028NP) protein is Phosphoribosylformylglycinamidine synthase.